The primary structure comprises 82 residues: MAGLKVFSFALLLILTFSLIDVEGYNVENGGSLCCNNHPKFGKCNTKNDDQRCNSWCLNGCDNGKGGYCKSMSHGGQCHCYC.

The signal sequence occupies residues 1–24 (MAGLKVFSFALLLILTFSLIDVEG). Disulfide bonds link cysteine 34-cysteine 82, cysteine 44-cysteine 69, cysteine 53-cysteine 78, and cysteine 57-cysteine 80.

Belongs to the DEFL family.

Its subcellular location is the secreted. This is Defensin-like protein 22 from Arabidopsis thaliana (Mouse-ear cress).